Here is a 422-residue protein sequence, read N- to C-terminus: Glycine amidinotransferase, mitochondrial (422 aa).

Residues 1 to 37 constitute a mitochondrion transit peptide; that stretch reads MLRVRCLRGGSRGAEAAHFIGSRLGRAFTGWVQRSLQ. Residues Asp253 and His302 contribute to the active site. Cys406 functions as the Amidino-cysteine intermediate in the catalytic mechanism. At Thr416 the chain carries Phosphothreonine.

It belongs to the amidinotransferase family. In terms of assembly, homodimer.

It is found in the mitochondrion inner membrane. It catalyses the reaction L-arginine + glycine = guanidinoacetate + L-ornithine. Its pathway is amine and polyamine biosynthesis; creatine biosynthesis; creatine from L-arginine and glycine: step 1/2. Functionally, catalyzes the biosynthesis of guanidinoacetate, the immediate precursor of creatine. Creatine plays a vital role in energy metabolism in muscle tissues. May play a role in embryonic and central nervous system development. This chain is Glycine amidinotransferase, mitochondrial, found in Gallus gallus (Chicken).